The chain runs to 467 residues: Iroquois-class homeodomain protein irx-1 (467 aa).

A DNA-binding region (homeobox; TALE-type) is located at residues 126–188 (DPGRPKNATR…NARRRLKKEN (63 aa)). 3 disordered regions span residues 198 to 307 (EDDN…PHNK), 319 to 342 (SPDG…PIQH), and 410 to 467 (SLSS…LPSA). Acidic residues-rich tracts occupy residues 215 to 225 (EDDEEIDLESI) and 233 to 244 (NDGEQSNEEEDE). Over residues 245–262 (KLEHLRQGEKESFKKESE) the composition is skewed to basic and acidic residues. Positions 415-431 (KTPERTSPKHSDRENLP) are enriched in basic and acidic residues. Polar residues predominate over residues 447–460 (RENTLSQQEGTSRI).

The protein belongs to the TALE/IRO homeobox family. In terms of tissue distribution, expressed in the neural plate in overlapping patterns with other irx members, which all share an anterior border of expression. Also expressed in the mesoderm, placodes and notochord. Broadly expressed in the tailbud rhombencephalon (hindbrain). Outside the nervous system and at tailbud stages, expressed in the developing otic vesicle, branchial arches, prospective heart region and pronephros.

It is found in the nucleus. Its function is as follows. Acts partially redundantly with other irx members in neural patterning. Required for formation of the posterior forebrain, midbrain, hindbrain, and to a lesser extent, spinal cord. Acts early in neural plate development to induce expression of some but not all proneural genes, and specify a neural precursor state. Also up-regulates repressors that prevent neuronal differentiation. Patterns the neuroectoderm in both the anterior/posterior and dorsal/ventral axes. Acts primarily as a transcriptional repressor during neural development, and binds to the bmp4 promoter to repress gene expression and thus mediate down-regulation of bmp4 by wnt signaling. Controls multiple processes through bmp4-repression including neural plate development, neural crest specification and Spemann organizer development. Involved in the specification of the preplacodal field at the anterior border of the neural plate. Regulates the genetic cascade of interactions that are necessary for positioning the isthmus organizer and the formation of the midbrain-hindbrain boundary. Required during at least two stages of pronephros kidney development; during neurula stages, maintains transcription of key renal genes to define the size and identity of the pronephric anlage, probably in part through regulation of bmp-signaling. Subsequently required for proper formation of the intermediate tubule segment of the pronephros. Acts principally as a transcriptional activator during pronephros development. The protein is Iroquois-class homeodomain protein irx-1 of Xenopus tropicalis (Western clawed frog).